The following is a 271-amino-acid chain: Carboxy-terminal domain RNA polymerase II polypeptide A small phosphatase 2 (271 aa).

A Phosphoserine modification is found at Ser5. The region spanning 97 to 255 is the FCP1 homology domain; the sequence is EDQGRICVVI…LNLIPIFEEL (159 aa). The 4-aspartylphosphate intermediate role is filled by Asp107. Asp107, Asp109, and Asn218 together coordinate Mg(2+). Asp109 acts as the Proton donor in catalysis.

As to quaternary structure, monomer. Interacts with REST. Requires Mg(2+) as cofactor. In terms of tissue distribution, expression is restricted to non-neuronal tissues. Highest expression in pancreas and lowest in liver.

The protein resides in the nucleus. It catalyses the reaction O-phospho-L-seryl-[protein] + H2O = L-seryl-[protein] + phosphate. It carries out the reaction O-phospho-L-threonyl-[protein] + H2O = L-threonyl-[protein] + phosphate. Its function is as follows. Preferentially catalyzes the dephosphorylation of 'Ser-5' within the tandem 7 residue repeats in the C-terminal domain (CTD) of the largest RNA polymerase II subunit POLR2A. Negatively regulates RNA polymerase II transcription, possibly by controlling the transition from initiation/capping to processive transcript elongation. Recruited by REST to neuronal genes that contain RE-1 elements, leading to neuronal gene silencing in non-neuronal cells. May contribute to the development of sarcomas. The polypeptide is Carboxy-terminal domain RNA polymerase II polypeptide A small phosphatase 2 (CTDSP2) (Homo sapiens (Human)).